We begin with the raw amino-acid sequence, 300 residues long: 4-hydroxy-tetrahydrodipicolinate synthase (300 aa).

Threonine 45 lines the pyruvate pocket. Tyrosine 140 acts as the Proton donor/acceptor in catalysis. The active-site Schiff-base intermediate with substrate is lysine 169. Isoleucine 210 is a pyruvate binding site.

Belongs to the DapA family. In terms of assembly, homotetramer; dimer of dimers.

It localises to the cytoplasm. The enzyme catalyses L-aspartate 4-semialdehyde + pyruvate = (2S,4S)-4-hydroxy-2,3,4,5-tetrahydrodipicolinate + H2O + H(+). The protein operates within amino-acid biosynthesis; L-lysine biosynthesis via DAP pathway; (S)-tetrahydrodipicolinate from L-aspartate: step 3/4. Its function is as follows. Catalyzes the condensation of (S)-aspartate-beta-semialdehyde [(S)-ASA] and pyruvate to 4-hydroxy-tetrahydrodipicolinate (HTPA). In Helicobacter pylori (strain G27), this protein is 4-hydroxy-tetrahydrodipicolinate synthase.